The primary structure comprises 413 residues: Monacolin J acid methylbutanoyltransferase (413 aa).

Arg73 is a binding site for monacolin J. Ser76 (acyl-ester intermediate) is an active-site residue. Monacolin J contacts are provided by Arg173, Tyr188, and Tyr258. A 2-methylbutanoate-binding site is contributed by Gly366. 2 residues coordinate monacolin J: Glu388 and Trp390.

The protein belongs to the class-A beta-lactamase family. Interacts with LovF.

It carries out the reaction monacolin J carboxylate + (S)-2-methylbutanoyl-[2-methylbutanoate polyketide synthase] = lovastatin carboxylate + holo-[2-methylbutanoate polyketide synthase]. It participates in polyketide biosynthesis; lovastatin biosynthesis. Monacolin J acid methylbutanoyltransferase; part of the gene cluster that mediates the biosynthesis of lovastatin (also known as mevinolin, mevacor or monacolin K), a hypolipidemic inhibitor of (3S)-hydroxymethylglutaryl-coenzyme A (HMG-CoA) reductase (HMGR). The first step in the biosynthesis of lovastatin is the production of dihydromonacolin L acid by the lovastatin nonaketide synthase lovB and the trans-acting enoyl reductase lovC via condensation of one acetyl-CoA unit and 8 malonyl-CoA units. Dihydromonacolin L acid is released from lovB by the thioesterase lovG. Next, dihydromonacolin L acid is oxidized by the dihydromonacolin L monooxygenase lovA twice to form monacolin J acid. The 2-methylbutyrate moiety of lovastatin is synthesized by the lovastatin diketide synthase lovF via condensation of one acetyl-CoA unit and one malonyl-CoA unit. Finally, the covalent attachment of this moiety to monacolin J acid is catalyzed by the transesterase lovD to yield lovastatin. LovD has broad substrate specificity and can also convert monacolin J to simvastatin using alpha-dimethylbutanoyl-S-methyl-3-mercaptopropionate (DMB-S-MMP) as the thioester acyl donor, and can also catalyze the reverse reaction and function as hydrolase in vitro. LovD has much higher activity with LovF-bound 2-methylbutanoate than with free diketide substrates. This is Monacolin J acid methylbutanoyltransferase from Aspergillus terreus (strain NIH 2624 / FGSC A1156).